The following is a 100-amino-acid chain: Urease subunit gamma (100 aa).

The protein belongs to the urease gamma subunit family. As to quaternary structure, heterotrimer of UreA (gamma), UreB (beta) and UreC (alpha) subunits. Three heterotrimers associate to form the active enzyme.

Its subcellular location is the cytoplasm. It carries out the reaction urea + 2 H2O + H(+) = hydrogencarbonate + 2 NH4(+). It functions in the pathway nitrogen metabolism; urea degradation; CO(2) and NH(3) from urea (urease route): step 1/1. This is Urease subunit gamma from Magnetococcus marinus (strain ATCC BAA-1437 / JCM 17883 / MC-1).